The following is a 271-amino-acid chain: GATA transcription factor 19 (271 aa).

The segment at 1–23 (MAAEPPADGRDPPADDGAAGDGA) is disordered. The 36-residue stretch at 33 to 68 (LSAASEQLTLVYQGEVYVFDPVPPQKVQAVLLVLGG) folds into the Tify domain. The region spanning 95 to 137 (RIASLMRFREKRKERCFDKKIRYSVRKEVAQKMKRRKGQFAGR) is the CCT domain. Residues 166–193 (CQNCGISSRLTPAMRRGPAGPRSLCNAC) form a GATA-type zinc finger. The disordered stretch occupies residues 238–271 (NQTTMKTDTEMVPEQEQKADVLPPTKEEDSMATS). The segment covering 252-271 (QEQKADVLPPTKEEDSMATS) has biased composition (basic and acidic residues).

This sequence belongs to the type IV zinc-finger family. Class C subfamily.

The protein localises to the nucleus. Its function is as follows. Transcriptional activator that specifically binds 5'-GATA-3' or 5'-GAT-3' motifs within gene promoters. The sequence is that of GATA transcription factor 19 from Oryza sativa subsp. indica (Rice).